A 379-amino-acid chain; its full sequence is tRNA-specific 2-thiouridylase MnmA (379 aa).

ATP-binding positions include alanine 9–serine 16 and methionine 35. Residues asparagine 94–aspartate 96 are interaction with target base in tRNA. The active-site Nucleophile is cysteine 99. A disulfide bridge links cysteine 99 with cysteine 195. Glycine 123 contacts ATP. The segment at lysine 145 to glutamine 147 is interaction with tRNA. Cysteine 195 functions as the Cysteine persulfide intermediate in the catalytic mechanism. Positions arginine 307–tyrosine 308 are interaction with tRNA.

The protein belongs to the MnmA/TRMU family.

It localises to the cytoplasm. The catalysed reaction is S-sulfanyl-L-cysteinyl-[protein] + uridine(34) in tRNA + AH2 + ATP = 2-thiouridine(34) in tRNA + L-cysteinyl-[protein] + A + AMP + diphosphate + H(+). Catalyzes the 2-thiolation of uridine at the wobble position (U34) of tRNA, leading to the formation of s(2)U34. The sequence is that of tRNA-specific 2-thiouridylase MnmA from Xylella fastidiosa (strain 9a5c).